Consider the following 169-residue polypeptide: MIAVYPGSFDPITLGHLDVIERGCKLFETVVVAVSKNPNKIPLFTVEQRIQQIRTCTLHLANVEIDAFHGLTVSYAKMRQAQVLLRGLRAVSDFEYELQMAHTNKSLYPQIETVFLTTANEYSFLSSSQVKEIARFGGSVAHLVPANVAIDLEKCFAQTPTVSTPIAQD.

Substrate is bound at residue Ser-8. Residues 8–9 (SF) and His-16 each bind ATP. Lys-40, Thr-72, and Arg-86 together coordinate substrate. Residues 87–89 (GLR), Glu-97, and 122–128 (YSFLSSS) each bind ATP.

It belongs to the bacterial CoaD family. In terms of assembly, homohexamer. Mg(2+) serves as cofactor.

It localises to the cytoplasm. It carries out the reaction (R)-4'-phosphopantetheine + ATP + H(+) = 3'-dephospho-CoA + diphosphate. Its pathway is cofactor biosynthesis; coenzyme A biosynthesis; CoA from (R)-pantothenate: step 4/5. Functionally, reversibly transfers an adenylyl group from ATP to 4'-phosphopantetheine, yielding dephospho-CoA (dPCoA) and pyrophosphate. The sequence is that of Phosphopantetheine adenylyltransferase from Cyanothece sp. (strain PCC 7425 / ATCC 29141).